The following is a 149-amino-acid chain: Lipoprotein signal peptidase (149 aa).

3 helical membrane passes run Ser-24 to Leu-44, Lys-57 to Trp-77, and Gly-81 to Ile-101. Residues Asp-111 and Asp-127 contribute to the active site. A helical membrane pass occupies residues Ile-122–Leu-142.

This sequence belongs to the peptidase A8 family.

It localises to the cell membrane. The enzyme catalyses Release of signal peptides from bacterial membrane prolipoproteins. Hydrolyzes -Xaa-Yaa-Zaa-|-(S,diacylglyceryl)Cys-, in which Xaa is hydrophobic (preferably Leu), and Yaa (Ala or Ser) and Zaa (Gly or Ala) have small, neutral side chains.. It participates in protein modification; lipoprotein biosynthesis (signal peptide cleavage). This protein specifically catalyzes the removal of signal peptides from prolipoproteins. In Lactiplantibacillus plantarum (strain ATCC BAA-793 / NCIMB 8826 / WCFS1) (Lactobacillus plantarum), this protein is Lipoprotein signal peptidase.